Consider the following 358-residue polypeptide: Bis(monoacylglycero)phosphate synthase CLN5 (358 aa).

Topologically, residues 1-23 are cytoplasmic; it reads MAQEVDTAQGAEMRRGAGAARGR. The chain crosses the membrane as a helical; Signal-anchor for type II membrane protein span at residues 24 to 40; it reads ASWCWALALLWLAVVPG. At 41-358 the chain is on the lumenal side; the sequence is WSRVSGIPSR…PIRNKTLSGL (318 aa). 2 disulfides stabilise this stretch: Cys-70–Cys-159 and Cys-77–Cys-165. His-117 (proton acceptor) is an active-site residue. Residues Asn-130, Asn-143, Asn-178, and Asn-203 are each glycosylated (N-linked (GlcNAc...) asparagine). Cys-231 acts as the Nucleophile; Acyl-thioester intermediate in catalysis. 3 N-linked (GlcNAc...) asparagine glycosylation sites follow: Asn-255, Asn-271, and Asn-281. The tract at residues 304–343 is membrane-anchoring; that stretch reads FLLSLLQIFDAVIVHKQFYLFYNFEYWFLPMKFPFIKITY. N-linked (GlcNAc...) asparagine glycosylation occurs at Asn-352.

It belongs to the CLN5 family. As to quaternary structure, multimer. Interacts with SORT1, RAB5A and RAB7A. Interacts with PPT1, TPP1, CLN3, CLN6, CLN8, ATP5F1A and ATP5F1B. In terms of processing, N-glycosylated with both high mannose and complex type sugars. Glycosylation is important for proper folding and trafficking to the lysosomes. Post-translationally, the type II membrane signal anchor is proteolytically cleaved to produce a mature form that is transported to the lysosomes (Bis(monoacylglycero)phosphate synthase CLN5, secreted form). Can undergo proteolytic cleavage at the C-terminus, probably by a cysteine protease and may involve the removal of approximately 10-15 residues from the C-terminal end. Ubiquitous.

It is found in the lysosome. It localises to the membrane. It carries out the reaction S-hexadecanoyl-L-cysteinyl-[protein] + H2O = L-cysteinyl-[protein] + hexadecanoate + H(+). The enzyme catalyses 2 1-acyl-sn-glycero-3-phospho-(1'-sn-glycerol) = 1-acyl-sn-glycero-3-phospho-(3'-acyl-sn-1'-glycerol) + sn-glycero-3-phospho-(1'-sn-glycerol). The catalysed reaction is 2 1-(9Z-octadecenoyl)-sn-glycero-3-phospho-(1'-sn-glycerol) = 1-(9Z-octadecenoyl)-sn-glycero-3-phospho-(3'-(9Z-octadecenoyl)-1'-sn-glycerol) + sn-glycero-3-phospho-(1'-sn-glycerol). It catalyses the reaction 2 1-octadecanoyl-sn-glycero-3-phospho-(1'-sn-glycerol) = 1-octadecanoyl-sn-glycero-3-phospho-(3'-octadecanoyl-1'-sn-glycerol) + sn-glycero-3-phospho-(1'-sn-glycerol). It carries out the reaction 2 1-hexadecanoyl-sn-glycero-3-phospho-(1'-sn-glycerol) = 1-hexadecanoyl-sn-glycero-3-phospho-(3'-hexadecanoyl-1'-sn-glycerol) + sn-glycero-3-phospho-(1'-sn-glycerol). The enzyme catalyses 2 1-tetradecanoyl-sn-glycero-3-phospho-(1'-sn-glycerol) = 1-tetradecanoyl-sn-glycero-3-phospho-(3'-tetradecanoyl-1'-sn-glycerol) + sn-glycero-3-phospho-(1'-sn-glycerol). Its activity is regulated as follows. Anionic phospholipids activate bis(monoacylglycero)phosphate (BMP) synthase activity. Amiodarone, a cationic amphiphilic drug inhibits BMP synthase activity towards liposomal lysophosphatidylglycerol. Palmostatin B inhibits palmitoyl protein thioesterase activity. Catalyzes the synthesis of bis(monoacylglycero)phosphate (BMP) via transacylation of 2 molecules of lysophosphatidylglycerol (LPG). BMP also known as lysobisphosphatidic acid plays a key role in the formation of intraluminal vesicles and in maintaining intracellular cholesterol homeostasis. Can use only LPG as the exclusive lysophospholipid acyl donor for base exchange and displays BMP synthase activity towards various LPGs (LPG 14:0, LPG 16:0, LPG 18:0, LPG 18:1) with a higher preference for longer chain lengths. Plays a role in influencing the retrograde trafficking of lysosomal sorting receptors SORT1 and IGF2R from the endosomes to the trans-Golgi network by controlling the recruitment of retromer complex to the endosomal membrane. Regulates the localization and activation of RAB7A which is required to recruit the retromer complex to the endosomal membrane. Functionally, exhibits palmitoyl protein thioesterase (S-depalmitoylation) activity in vitro and most likely plays a role in protein S-depalmitoylation. The sequence is that of Bis(monoacylglycero)phosphate synthase CLN5 (CLN5) from Homo sapiens (Human).